Reading from the N-terminus, the 406-residue chain is Peptidase T (406 aa).

His-77 contacts Zn(2+). Residue Asp-79 is part of the active site. Asp-139 contacts Zn(2+). Glu-173 functions as the Proton acceptor in the catalytic mechanism. Residues Glu-174, Asp-196, and His-377 each coordinate Zn(2+).

It belongs to the peptidase M20B family. Zn(2+) serves as cofactor.

It localises to the cytoplasm. The catalysed reaction is Release of the N-terminal residue from a tripeptide.. Its function is as follows. Cleaves the N-terminal amino acid of tripeptides. The sequence is that of Peptidase T from Parabacteroides distasonis (strain ATCC 8503 / DSM 20701 / CIP 104284 / JCM 5825 / NCTC 11152).